Reading from the N-terminus, the 752-residue chain is Pre-mRNA-processing factor 39 (752 aa).

Residues 1–148 are disordered; it reads MEDSGESMTG…DPAAPQEPEL (148 aa). Polar residues predominate over residues 28–42; that stretch reads TTGTDDVTGLSTSDL. Composition is skewed to low complexity over residues 43–56, 76–94, and 133–148; these read TTEQ…QTQP, QSAS…PPES, and EPAA…EPEL. 3 HAT repeats span residues 180–212, 214–246, and 254–289; these read NHLL…IERK, GYIQ…FLRE, and EAES…WETE. The interval 347-374 is disordered; the sequence is NKPSGDEDAETEAPGEELPPGTEDLPDP. A compositionally biased stretch (acidic residues) spans 352-361; it reads DEDAETEAPG. HAT repeat units follow at residues 408 to 440 and 442 to 474; these read AFEE…FELE and GTPE…YLES. The segment covering 678-699 has biased composition (basic and acidic residues); it reads SFKRKAENGSEEPDAKRQRTDD. Residues 678–703 form a disordered region; it reads SFKRKAENGSEEPDAKRQRTDDQSVA. One copy of the HAT 6 repeat lies at 700 to 731; that stretch reads QSVASGQMMDMQANHAGYNYNNWYQYNSWGSQ.

Belongs to the PRP39 family.

It is found in the nucleus. In terms of biological role, involved in pre-mRNA splicing. This is Pre-mRNA-processing factor 39 (prpf39) from Danio rerio (Zebrafish).